A 316-amino-acid polypeptide reads, in one-letter code: Glutathione synthetase (316 aa).

The 187-residue stretch at 125–311 (KLFTAWFPEL…ITGMLMNAIE (187 aa)) folds into the ATP-grasp domain. 151–207 (HQKHGDVIFKPLDGMGGASIFRLKKDDPNVGVIIETLTEHGNRFCMAQNFLPAIKEG) serves as a coordination point for ATP. The Mg(2+) site is built by Glu-281 and Asn-283.

It belongs to the prokaryotic GSH synthase family. Mg(2+) serves as cofactor. Mn(2+) is required as a cofactor.

The enzyme catalyses gamma-L-glutamyl-L-cysteine + glycine + ATP = glutathione + ADP + phosphate + H(+). The protein operates within sulfur metabolism; glutathione biosynthesis; glutathione from L-cysteine and L-glutamate: step 2/2. This is Glutathione synthetase from Photorhabdus laumondii subsp. laumondii (strain DSM 15139 / CIP 105565 / TT01) (Photorhabdus luminescens subsp. laumondii).